Here is a 105-residue protein sequence, read N- to C-terminus: MSIARSAQPIGWISCPPKGGSSCCRCGGGYTHIFCVSAWTGLVVDLQAEQVRSVVTERLRRRIGRGAPILAGTLAPGVGLAAQNREFRQFTGRSAPPSATIAFGE.

In terms of assembly, forms a complex with cognate antitoxin MazE8.

In terms of biological role, putative toxic component of a type II toxin-antitoxin (TA) system. Acts as an endoribonuclease. Neutralized by coexpression with cognate antitoxin MazE8. This is Putative toxin MazF8 (mazF8) from Mycobacterium tuberculosis (strain CDC 1551 / Oshkosh).